The primary structure comprises 79 residues: MCCNYYGNSCGYGSGCGCGYGSGSGCGCGYGTGYGCGYGCGFGSHYGCGYGTGYGCGYGSGSGYCGYRPFCFRRCYSSC.

Interacts with hair keratins.

In terms of biological role, in the hair cortex, hair keratin intermediate filaments are embedded in an interfilamentous matrix, consisting of hair keratin-associated proteins (KRTAP), which are essential for the formation of a rigid and resistant hair shaft through their extensive disulfide bond cross-linking with abundant cysteine residues of hair keratins. The matrix proteins include the high-sulfur and high-glycine-tyrosine keratins. This is Keratin-associated protein 21-1 (KRTAP21-1) from Homo sapiens (Human).